A 298-amino-acid polypeptide reads, in one-letter code: 4-hydroxy-tetrahydrodipicolinate synthase (298 aa).

Pyruvate is bound at residue Thr-48. Tyr-137 functions as the Proton donor/acceptor in the catalytic mechanism. The Schiff-base intermediate with substrate role is filled by Lys-166. A pyruvate-binding site is contributed by Ile-207.

Belongs to the DapA family. In terms of assembly, homotetramer; dimer of dimers.

It localises to the cytoplasm. The catalysed reaction is L-aspartate 4-semialdehyde + pyruvate = (2S,4S)-4-hydroxy-2,3,4,5-tetrahydrodipicolinate + H2O + H(+). The protein operates within amino-acid biosynthesis; L-lysine biosynthesis via DAP pathway; (S)-tetrahydrodipicolinate from L-aspartate: step 3/4. Functionally, catalyzes the condensation of (S)-aspartate-beta-semialdehyde [(S)-ASA] and pyruvate to 4-hydroxy-tetrahydrodipicolinate (HTPA). This is 4-hydroxy-tetrahydrodipicolinate synthase from Campylobacter jejuni subsp. doylei (strain ATCC BAA-1458 / RM4099 / 269.97).